The primary structure comprises 342 residues: Lipopolysaccharide heptosyltransferase 1 (342 aa).

8 residues coordinate ADP-L-glycero-beta-D-manno-heptose: Ser-188, Ser-189, Lys-193, Glu-225, Asp-268, Ser-269, Gly-270, and His-273.

This sequence belongs to the glycosyltransferase 9 family.

The protein resides in the cell inner membrane. The enzyme catalyses an alpha-Kdo-(2-&gt;4)-alpha-Kdo-(2-&gt;6)-lipid A + ADP-L-glycero-beta-D-manno-heptose = an L-alpha-D-Hep-(1-&gt;5)-[alpha-Kdo-(2-&gt;4)]-alpha-Kdo-(2-&gt;6)-lipid A + ADP + H(+). It participates in bacterial outer membrane biogenesis; LPS core biosynthesis. Functionally, glycosyltransferase involved in the biosynthesis of the core oligosaccharide region of lipopolysaccharide (LPS). Catalyzes the addition of the first heptose unit to one 3-deoxy-D-manno-octulosonic acid (Kdo) residue of the Kdo2-lipid A module. The polypeptide is Lipopolysaccharide heptosyltransferase 1 (Campylobacter coli).